We begin with the raw amino-acid sequence, 382 residues long: Neuropeptide Y receptor type 1 (382 aa).

Over 1-33 (MNSTLFSKVENHSIHYNASENSPLLAFENDDCH) the chain is Extracellular. Asn-2, Asn-11, and Asn-17 each carry an N-linked (GlcNAc...) asparagine glycan. Residues 34 to 54 (LPLAVIFTLALAYGAVIILGV) traverse the membrane as a helical segment. Over 55–75 (SGNLALIIIILKQKEMRNVTN) the chain is Cytoplasmic. The helical transmembrane segment at 76–96 (ILIVNLSFSDLLVAVMCLPFT) threads the bilayer. Residues 97 to 115 (FVYTLMDHWVFGETMCKLN) lie on the Extracellular side of the membrane. Cys-112 and Cys-197 are oxidised to a cystine. Residues 116–136 (PFVQCVSITVSIFSLVLIAVE) traverse the membrane as a helical segment. Residues 137-153 (RHQLIINPRGWRPNNRH) are Cytoplasmic-facing. The chain crosses the membrane as a helical span at residues 154–174 (AYIGITVIWVLAVASSLPFVI). Residues 175-210 (YQILTDEPFQNVSLAAFKDKYVCFDKFPSDSHRLSY) are Extracellular-facing. A helical membrane pass occupies residues 211 to 231 (TTLLLVLQYFGPLCFIFICYF). The Cytoplasmic portion of the chain corresponds to 232-259 (KIYIRLKRRNNMMDKIRDSKYRSSETKR). Residues 260–280 (INIMLLSIVVAFAVCWLPLTI) traverse the membrane as a helical segment. Residues 281–298 (FNTVFDWNHQIIATCNHN) are Extracellular-facing. A helical membrane pass occupies residues 299–319 (LLFLLCHLTAMISTCVNPIFY). Topologically, residues 320–382 (GFLNKNFQRD…KISMNDNEKV (63 aa)) are cytoplasmic. Residue Cys-337 is the site of S-palmitoyl cysteine attachment. Phosphoserine occurs at positions 367 and 375.

Belongs to the G-protein coupled receptor 1 family. As to expression, the alpha form is highly expressed in the brain, heart, kidney, spleen, skeletal muscle, and lung, whereas the beta receptor mRNA was not detected in these tissues. However, the beta form is expressed in mouse embryonic developmental stage (7 and 11 days), bone marrow cells and several hematopoietic cell lines.

It localises to the cell membrane. Functionally, receptor for neuropeptide Y and peptide YY. The protein is Neuropeptide Y receptor type 1 (Npy1r) of Mus musculus (Mouse).